The sequence spans 170 residues: Glycine cleavage system H protein, mitochondrial (170 aa).

A mitochondrion-targeting transit peptide spans 1 to 45 (MSLRVVRSVRAVACSLRIALASCPPRPWAPSAAAVRSLRTGSALL). The Lipoyl-binding domain maps to 63–145 (IGTVGISNFA…YEDGWLIKMT (83 aa)). Lys-104 is modified (N6-lipoyllysine).

The protein belongs to the GcvH family. The glycine cleavage system is composed of four proteins: P (GLDC), T (GCST), L (DLD) and H (GCSH). Interacts with GLDC. (R)-lipoate serves as cofactor.

Its subcellular location is the mitochondrion. Functionally, the glycine cleavage system catalyzes the degradation of glycine. The H protein (GCSH) shuttles the methylamine group of glycine from the P protein (GLDC) to the T protein (GCST). Has a pivotal role in the lipoylation of enzymes involved in cellular energetics such as the mitochondrial dihydrolipoyllysine-residue acetyltransferase component of pyruvate dehydrogenase complex (DLAT), and the mitochondrial dihydrolipoyllysine-residue succinyltransferase component of 2-oxoglutarate dehydrogenase complex (DLST). This Rattus norvegicus (Rat) protein is Glycine cleavage system H protein, mitochondrial.